Here is a 470-residue protein sequence, read N- to C-terminus: 3-isopropylmalate dehydratase large subunit (470 aa).

Cys349, Cys409, and Cys412 together coordinate [4Fe-4S] cluster.

This sequence belongs to the aconitase/IPM isomerase family. LeuC type 1 subfamily. As to quaternary structure, heterodimer of LeuC and LeuD. The cofactor is [4Fe-4S] cluster.

The catalysed reaction is (2R,3S)-3-isopropylmalate = (2S)-2-isopropylmalate. It functions in the pathway amino-acid biosynthesis; L-leucine biosynthesis; L-leucine from 3-methyl-2-oxobutanoate: step 2/4. Functionally, catalyzes the isomerization between 2-isopropylmalate and 3-isopropylmalate, via the formation of 2-isopropylmaleate. This chain is 3-isopropylmalate dehydratase large subunit, found in Koribacter versatilis (strain Ellin345).